The following is a 126-amino-acid chain: MPEPAKSAPAPKKGSKKAVTKTQKKGDKKRRKSRKESYSIYVYKVLKQVHPDTGISSKAMGIMNSFVNDIFERIAGEASRLAHYNKRSTITSREIQTAVRLLLPGELAKHAVSEGTKAVTKYTSSK.

Low complexity predominate over residues 1 to 12; that stretch reads MPEPAKSAPAPK. Residues 1 to 35 form a disordered region; sequence MPEPAKSAPAPKKGSKKAVTKTQKKGDKKRRKSRK. 2 positions are modified to N6-acetyllysine: lysine 6 and lysine 13. The span at 13 to 34 shows a compositional bias: basic residues; the sequence is KGSKKAVTKTQKKGDKKRRKSR. Serine 15 is subject to Phosphoserine. Lysine 16 and lysine 21 each carry N6-acetyllysine. O-linked (GlcNAc) serine glycosylation is present at serine 113. Residue lysine 121 forms a Glycyl lysine isopeptide (Lys-Gly) (interchain with G-Cter in ubiquitin) linkage.

It belongs to the histone H2B family. In terms of assembly, the nucleosome is a histone octamer containing two molecules each of H2A, H2B, H3 and H4 assembled in one H3-H4 heterotetramer and two H2A-H2B heterodimers. The octamer wraps approximately 147 bp of DNA. Monoubiquitination of Lys-121 by the BRE1 gives a specific tag for epigenetic transcriptional activation and is also prerequisite for histone H3 'Lys-4' and 'Lys-79' methylation. Post-translationally, phosphorylated on Ser-15 during apoptosis; which facilitates apoptotic chromatin condensation. In terms of processing, glcNAcylation at Ser-113 promotes monoubiquitination of Lys-121. It fluctuates in response to extracellular glucose, and associates with transcribed genes.

The protein resides in the nucleus. The protein localises to the chromosome. Its function is as follows. Core component of nucleosome. Nucleosomes wrap and compact DNA into chromatin, limiting DNA accessibility to the cellular machineries which require DNA as a template. Histones thereby play a central role in transcription regulation, DNA repair, DNA replication and chromosomal stability. DNA accessibility is regulated via a complex set of post-translational modifications of histones, also called histone code, and nucleosome remodeling. In Gallus gallus (Chicken), this protein is Histone H2B 5 (H2B-V).